The sequence spans 398 residues: Putative molybdopterin biosynthesis protein MJ0666 (398 aa).

This sequence belongs to the MoeA family.

It participates in cofactor biosynthesis; molybdopterin biosynthesis. In Methanocaldococcus jannaschii (strain ATCC 43067 / DSM 2661 / JAL-1 / JCM 10045 / NBRC 100440) (Methanococcus jannaschii), this protein is Putative molybdopterin biosynthesis protein MJ0666.